We begin with the raw amino-acid sequence, 476 residues long: Aspartyl/glutamyl-tRNA(Asn/Gln) amidotransferase subunit B (476 aa).

It belongs to the GatB/GatE family. GatB subfamily. In terms of assembly, heterotrimer of A, B and C subunits.

The catalysed reaction is L-glutamyl-tRNA(Gln) + L-glutamine + ATP + H2O = L-glutaminyl-tRNA(Gln) + L-glutamate + ADP + phosphate + H(+). It catalyses the reaction L-aspartyl-tRNA(Asn) + L-glutamine + ATP + H2O = L-asparaginyl-tRNA(Asn) + L-glutamate + ADP + phosphate + 2 H(+). Functionally, allows the formation of correctly charged Asn-tRNA(Asn) or Gln-tRNA(Gln) through the transamidation of misacylated Asp-tRNA(Asn) or Glu-tRNA(Gln) in organisms which lack either or both of asparaginyl-tRNA or glutaminyl-tRNA synthetases. The reaction takes place in the presence of glutamine and ATP through an activated phospho-Asp-tRNA(Asn) or phospho-Glu-tRNA(Gln). This is Aspartyl/glutamyl-tRNA(Asn/Gln) amidotransferase subunit B from Lacticaseibacillus paracasei (strain ATCC 334 / BCRC 17002 / CCUG 31169 / CIP 107868 / KCTC 3260 / NRRL B-441) (Lactobacillus paracasei).